The sequence spans 123 residues: Class II hydrophobin 2 (123 aa).

The first 16 residues, 1–16 (MRSFLVIATLAVGAFG), serve as a signal peptide directing secretion. 4 disulfides stabilise this stretch: Cys22/Cys70, Cys32/Cys61, Cys33/Cys45, and Cys71/Cys82.

Belongs to the cerato-ulmin hydrophobin family. As to quaternary structure, homodimer. Homodimers further self-assemble to form highly ordered films at water-air interfaces through intermolecular interactions.

The protein localises to the secreted. It localises to the cell wall. Functionally, aerial growth, conidiation, and dispersal of filamentous fungi in the environment rely upon a capability of their secreting small amphipathic proteins called hydrophobins (HPBs) with low sequence identity. Class I can self-assemble into an outermost layer of rodlet bundles on aerial cell surfaces, conferring cellular hydrophobicity that supports fungal growth, development and dispersal; whereas Class II form highly ordered films at water-air interfaces through intermolecular interactions but contribute nothing to the rodlet structure. Hyd2 is a class II hydrophobin that plays probably a role in intraspecific signaling or hyphal fusion. Not necessary for root adhesion and colonization. Might play an essential role since no deletion mutants could be obtained. The protein is Class II hydrophobin 2 of Bionectria ochroleuca (Gliocladium roseum).